Here is a 479-residue protein sequence, read N- to C-terminus: D-alanyl-D-alanine carboxypeptidase DacB (479 aa).

The N-terminal stretch at 1–26 (MKKLSSISTALGSFLLSVSFSLPTFA) is a signal peptide. S69 serves as the catalytic Acyl-ester intermediate. The active-site Proton acceptor is K72. S310 is an active-site residue. K420 provides a ligand contact to substrate.

This sequence belongs to the peptidase S13 family.

The protein resides in the periplasm. The catalysed reaction is Preferential cleavage: (Ac)2-L-Lys-D-Ala-|-D-Ala. Also transpeptidation of peptidyl-alanyl moieties that are N-acyl substituents of D-alanine.. Its pathway is cell wall biogenesis; peptidoglycan biosynthesis. Not involved in transpeptidation but exclusively catalyzes a DD-carboxypeptidase and DD-endopeptidase reaction. In Haemophilus influenzae (strain ATCC 51907 / DSM 11121 / KW20 / Rd), this protein is D-alanyl-D-alanine carboxypeptidase DacB (dacB).